A 371-amino-acid chain; its full sequence is Terpene cyclase 6 (371 aa).

The Mg(2+) site is built by Asp144, Asn266, Ser270, and Glu274. The D(D/E)XX(D/E) motif motif lies at 144–148 (DDVME). The NSE motif signature appears at 266–274 (NDLYSYDKE). A WxxxxxRY motif motif is present at residues 352–359 (HHATLGRY). (2E,6E)-farnesyl diphosphate contacts are provided by Arg358 and Tyr359.

It belongs to the terpene synthase family. As to quaternary structure, homodimer. Mg(2+) serves as cofactor.

It catalyses the reaction (2E,6E)-farnesyl diphosphate + H2O = (-)-alpha-acorenol + diphosphate. It functions in the pathway sesquiterpene biosynthesis. Its function is as follows. Terpene cyclase that catalyzes the cyclization of farnesyl diphosphate (FPP) to the spirocyclic sesquiterpene alpha-acorenol. The chain is Terpene cyclase 6 from Gibberella fujikuroi (strain CBS 195.34 / IMI 58289 / NRRL A-6831) (Bakanae and foot rot disease fungus).